The primary structure comprises 175 residues: NADH-ubiquinone oxidoreductase chain 6 (175 aa).

Helical transmembrane passes span 1-21, 25-45, 47-67, 88-108, and 149-169; these read MVTY…VGVS, SPIY…GVVL, FGGS…MLVV, VVLG…IYAL, and YGVW…VIIM.

It belongs to the complex I subunit 6 family. As to quaternary structure, core subunit of respiratory chain NADH dehydrogenase (Complex I) which is composed of 45 different subunits.

It localises to the mitochondrion inner membrane. It catalyses the reaction a ubiquinone + NADH + 5 H(+)(in) = a ubiquinol + NAD(+) + 4 H(+)(out). Core subunit of the mitochondrial membrane respiratory chain NADH dehydrogenase (Complex I) which catalyzes electron transfer from NADH through the respiratory chain, using ubiquinone as an electron acceptor. Essential for the catalytic activity and assembly of complex I. This is NADH-ubiquinone oxidoreductase chain 6 (MT-ND6) from Balaenoptera musculus (Blue whale).